A 302-amino-acid chain; its full sequence is Glutaminase (302 aa).

Ser-61, Asn-111, Glu-155, Asn-162, Tyr-186, Tyr-238, and Val-256 together coordinate substrate.

Belongs to the glutaminase family. As to quaternary structure, homotetramer.

The enzyme catalyses L-glutamine + H2O = L-glutamate + NH4(+). In Pseudomonas fluorescens (strain ATCC BAA-477 / NRRL B-23932 / Pf-5), this protein is Glutaminase.